Here is a 236-residue protein sequence, read N- to C-terminus: 15,16-dihydrobiliverdin:ferredoxin oxidoreductase (236 aa).

The protein belongs to the HY2 family.

The catalysed reaction is 15,16-dihydrobiliverdin + oxidized 2[4Fe-4S]-[ferredoxin] = biliverdin IXalpha + reduced 2[4Fe-4S]-[ferredoxin] + 2 H(+). Catalyzes the two-electron reduction of biliverdin IX-alpha at the C15 methine bridge. The chain is 15,16-dihydrobiliverdin:ferredoxin oxidoreductase from Prochlorococcus marinus (strain MIT 9515).